The following is a 138-amino-acid chain: Transcription antitermination protein NusB (138 aa).

It belongs to the NusB family.

In terms of biological role, involved in transcription antitermination. Required for transcription of ribosomal RNA (rRNA) genes. Binds specifically to the boxA antiterminator sequence of the ribosomal RNA (rrn) operons. In Blochmanniella floridana, this protein is Transcription antitermination protein NusB.